Reading from the N-terminus, the 156-residue chain is Probable cyclic pyranopterin monophosphate synthase (156 aa).

Substrate is bound by residues 74–76 (MCH) and 110–111 (ME). The active site involves Asp-125.

Belongs to the MoaC family. As to quaternary structure, homohexamer; trimer of dimers.

It carries out the reaction (8S)-3',8-cyclo-7,8-dihydroguanosine 5'-triphosphate = cyclic pyranopterin phosphate + diphosphate. It participates in cofactor biosynthesis; molybdopterin biosynthesis. In terms of biological role, catalyzes the conversion of (8S)-3',8-cyclo-7,8-dihydroguanosine 5'-triphosphate to cyclic pyranopterin monophosphate (cPMP). The sequence is that of Probable cyclic pyranopterin monophosphate synthase from Methanospirillum hungatei JF-1 (strain ATCC 27890 / DSM 864 / NBRC 100397 / JF-1).